Here is a 451-residue protein sequence, read N- to C-terminus: uncharacterized protein (451 aa).

Transmembrane regions (helical) follow at residues V11 to L31, I56 to T76, I151 to L171, F175 to F195, and V207 to I227. Positions T250–T300 are disordered. Composition is skewed to low complexity over residues N253–N262 and S280–T300. The next 2 helical transmembrane spans lie at F392–S412 and L413–L433.

It is found in the membrane. This is an uncharacterized protein from Dictyostelium discoideum (Social amoeba).